Reading from the N-terminus, the 907-residue chain is DNA mismatch repair protein MutS (907 aa).

Gly656–Ser663 is an ATP binding site.

The protein belongs to the DNA mismatch repair MutS family.

Functionally, this protein is involved in the repair of mismatches in DNA. It is possible that it carries out the mismatch recognition step. This protein has a weak ATPase activity. This chain is DNA mismatch repair protein MutS, found in Nitrobacter hamburgensis (strain DSM 10229 / NCIMB 13809 / X14).